The chain runs to 689 residues: Glycine--tRNA ligase beta subunit (689 aa).

Belongs to the class-II aminoacyl-tRNA synthetase family. In terms of assembly, tetramer of two alpha and two beta subunits.

Its subcellular location is the cytoplasm. It carries out the reaction tRNA(Gly) + glycine + ATP = glycyl-tRNA(Gly) + AMP + diphosphate. This is Glycine--tRNA ligase beta subunit from Pectobacterium atrosepticum (strain SCRI 1043 / ATCC BAA-672) (Erwinia carotovora subsp. atroseptica).